A 229-amino-acid chain; its full sequence is Endo-1,4-beta-xylanase 1 (229 aa).

A signal peptide spans 1–19 (MVAFSSLICALTSIASTLA). The propeptide occupies 20–51 (MPTGLEPESSVNVTERGMYDFVLGAHNDHRRR). Asparagine 31 carries N-linked (GlcNAc...) asparagine glycosylation. The 187-residue stretch at 42 to 228 (LGAHNDHRRR…GSGSASQSVS (187 aa)) folds into the GH11 domain. Residue tyrosine 117 coordinates substrate. Glutamate 126 serves as the catalytic Nucleophile. Residues tyrosine 128, arginine 160, proline 164, glutamine 174, and tyrosine 209 each contribute to the substrate site. Glutamate 215 serves as the catalytic Proton donor.

The protein belongs to the glycosyl hydrolase 11 (cellulase G) family.

The protein localises to the secreted. It carries out the reaction Endohydrolysis of (1-&gt;4)-beta-D-xylosidic linkages in xylans.. Its pathway is glycan degradation; xylan degradation. Functionally, glycoside hydrolase involved in the hydrolysis of xylan, a major plant cell wall hemicellulose made up of 1,4-beta-linked D-xylopyranose residues. Catalyzes the endohydrolysis of the main-chain 1,4-beta-glycosidic bonds connecting the xylose subunits yielding various xylooligosaccharides and xylose. In Hypocrea jecorina (strain QM6a) (Trichoderma reesei), this protein is Endo-1,4-beta-xylanase 1.